We begin with the raw amino-acid sequence, 293 residues long: uncharacterized protein (293 aa).

Asp119 is a catalytic residue.

Belongs to the pseudouridine synthase RluA family.

It catalyses the reaction a uridine in RNA = a pseudouridine in RNA. This is an uncharacterized protein from Helicobacter pylori (strain J99 / ATCC 700824) (Campylobacter pylori J99).